Here is a 274-residue protein sequence, read N- to C-terminus: Rhamnulose-1-phosphate aldolase (274 aa).

Residue E117 is part of the active site. The Zn(2+) site is built by H141, H143, and H212.

Belongs to the aldolase class II family. RhaD subfamily. In terms of assembly, homotetramer. Requires Zn(2+) as cofactor.

Its subcellular location is the cytoplasm. It catalyses the reaction L-rhamnulose 1-phosphate = (S)-lactaldehyde + dihydroxyacetone phosphate. Its pathway is carbohydrate degradation; L-rhamnose degradation; glycerone phosphate from L-rhamnose: step 3/3. Catalyzes the reversible cleavage of L-rhamnulose-1-phosphate to dihydroxyacetone phosphate (DHAP) and L-lactaldehyde. The chain is Rhamnulose-1-phosphate aldolase from Escherichia coli O7:K1 (strain IAI39 / ExPEC).